The chain runs to 573 residues: DEAD-box ATP-dependent RNA helicase 47A (573 aa).

The short motif at 131–159 is the Q motif element; that stretch reads KSFEELGLPPLLIDRLNKEGLTAPTEVQS. Residues 162-362 enclose the Helicase ATP-binding domain; the sequence is IPIISQKHDA…RSWGHDPVLV (201 aa). Residue 175-182 participates in ATP binding; the sequence is SYTGSGKT. Positions 293–296 match the DEAD box motif; sequence DEVD. The Helicase C-terminal domain occupies 421-565; it reads TLRRCIHALE…PCEFTEGKLL (145 aa).

Belongs to the DEAD box helicase family.

It catalyses the reaction ATP + H2O = ADP + phosphate + H(+). The protein is DEAD-box ATP-dependent RNA helicase 47A of Oryza sativa subsp. japonica (Rice).